The chain runs to 163 residues: Peptide methionine sulfoxide reductase MsrA (163 aa).

Residue cysteine 10 is part of the active site.

This sequence belongs to the MsrA Met sulfoxide reductase family.

It carries out the reaction L-methionyl-[protein] + [thioredoxin]-disulfide + H2O = L-methionyl-(S)-S-oxide-[protein] + [thioredoxin]-dithiol. The enzyme catalyses [thioredoxin]-disulfide + L-methionine + H2O = L-methionine (S)-S-oxide + [thioredoxin]-dithiol. In terms of biological role, has an important function as a repair enzyme for proteins that have been inactivated by oxidation. Catalyzes the reversible oxidation-reduction of methionine sulfoxide in proteins to methionine. This Vesicomyosocius okutanii subsp. Calyptogena okutanii (strain HA) protein is Peptide methionine sulfoxide reductase MsrA.